A 382-amino-acid chain; its full sequence is Beta-1,4-galactosyltransferase 6 (382 aa).

Topologically, residues 1–15 (MSALKRMMRVSNRSL) are cytoplasmic. Residues 16–35 (IAFIFFFSLSTSCLYFIYVA) traverse the membrane as a helical; Signal-anchor for type II membrane protein segment. Over 36-382 (PGIANTYLFM…MPELAPIEDY (347 aa)) the chain is Lumenal. N-linked (GlcNAc...) asparagine glycans are attached at residues asparagine 71, asparagine 75, asparagine 83, asparagine 84, asparagine 99, and asparagine 122. Cysteine 108 and cysteine 152 are oxidised to a cystine. UDP-alpha-D-galactose contacts are provided by residues 163–167 (PFRNR), 202–204 (FNR), 229–230 (VD), tyrosine 258, and tryptophan 290. Cysteine 223 and cysteine 242 form a disulfide bridge. Aspartate 230 lines the Mn(2+) pocket. 292 to 295 (GEDD) is an N-acetyl-D-glucosamine binding site. A glycan (N-linked (GlcNAc...) asparagine) is linked at asparagine 307. Histidine 323 contributes to the Mn(2+) binding site. Position 323 to 324 (323 to 324 (HH)) interacts with UDP-alpha-D-galactose. Residue arginine 334 coordinates N-acetyl-D-glucosamine. The N-linked (GlcNAc...) asparagine glycan is linked to asparagine 367.

This sequence belongs to the glycosyltransferase 7 family. The cofactor is Mn(2+). Mg(2+) serves as cofactor. Ca(2+) is required as a cofactor. As to expression, brain and kidney.

The protein resides in the golgi apparatus. It is found in the golgi stack membrane. The catalysed reaction is a beta-D-glucosyl-(1&lt;-&gt;1')-N-acylsphing-4-enine + UDP-alpha-D-galactose = a beta-D-Gal-(1-&gt;4)-beta-D-Glc-(1&lt;-&gt;1)-Cer(d18:1(4E)) + UDP + H(+). The protein operates within protein modification; protein glycosylation. It functions in the pathway sphingolipid metabolism. Its activity is regulated as follows. Inhibited by EDTA. Its function is as follows. Catalyzes the synthesis of lactosylceramide (LacCer) via the transfer of galactose from UDP-galactose to glucosylceramide (GlcCer). LacCer is the starting point in the biosynthesis of all gangliosides (membrane-bound glycosphingolipids) which play pivotal roles in the CNS including neuronal maturation and axonal and myelin formation. This chain is Beta-1,4-galactosyltransferase 6, found in Mus musculus (Mouse).